Here is a 69-residue protein sequence, read N- to C-terminus: Large ribosomal subunit protein uL29 (69 aa).

It belongs to the universal ribosomal protein uL29 family.

This Lachnoclostridium phytofermentans (strain ATCC 700394 / DSM 18823 / ISDg) (Clostridium phytofermentans) protein is Large ribosomal subunit protein uL29.